The sequence spans 223 residues: MSKDVIEYSKLFAKLVNTNDDTKLDDTIASFLYYMFPRELFIRAISLLESSDMFIYILDRVHNKEGNEHTSLIDVLVDEFYKGSSNSLLEYRLIVKDTNDGAPPILVDIAHWFCSCEEFCKYFHEALEKTDEKEELHDVLINEVDDHLQFSDDRFAQLDPHSLSKQWYFKFDKVCCSHLLAFSILLRSSINVLKFFTVNSNKVFVIAIDNIDEWLNLHINIVE.

It belongs to the SHU2 family. In terms of assembly, component of the SHU complex composed of at least CSM2, PSY3, SHU1 and SHU2.

It localises to the nucleus. Functionally, plays a role in a RAD51/RAD54-dependent homologous recombination repair (HRR) pathway to repair MMS-induced lesions during S-phase. Required for error-free repair of spontaneous and induced DNA lesions to protect the genome from mutation. The protein is Suppressor of hydroxyurea sensitivity protein 2 (SHU2) of Saccharomyces cerevisiae (strain ATCC 204508 / S288c) (Baker's yeast).